The following is a 157-amino-acid chain: 3-hydroxyacyl-[acyl-carrier-protein] dehydratase FabZ (157 aa).

Histidine 58 is an active-site residue.

The protein belongs to the thioester dehydratase family. FabZ subfamily.

It localises to the cytoplasm. It carries out the reaction a (3R)-hydroxyacyl-[ACP] = a (2E)-enoyl-[ACP] + H2O. In terms of biological role, involved in unsaturated fatty acids biosynthesis. Catalyzes the dehydration of short chain beta-hydroxyacyl-ACPs and long chain saturated and unsaturated beta-hydroxyacyl-ACPs. This Rhizorhabdus wittichii (strain DSM 6014 / CCUG 31198 / JCM 15750 / NBRC 105917 / EY 4224 / RW1) (Sphingomonas wittichii) protein is 3-hydroxyacyl-[acyl-carrier-protein] dehydratase FabZ.